The primary structure comprises 35 residues: Mu-theraphotoxin-Hd1a (35 aa).

3 disulfides stabilise this stretch: cysteine 2–cysteine 17, cysteine 9–cysteine 24, and cysteine 16–cysteine 31.

This sequence belongs to the neurotoxin 10 (Hwtx-1) family. 22 (Htx-4) subfamily. As to expression, expressed by the venom gland.

The protein localises to the secreted. Its function is as follows. Gating-modifier toxin that reversibly and voltage-independently inhibits human Nav1.1/SCN1A and Nav1.7/SCN9A (IC(50)=111 nM). It also shows moderate inhibition on Nav1.2/SCN2A (1 uM inhibits current by 55%), Nav1.6/SCN8A (31%), Nav1.3/SCN5A (27%) and Nav1.4/SCN4A (23%). This toxin inhibits Nav1.7/SCN9A by interacting with the S3b-S4 paddle motif in channel domain II. This Cyriopagopus doriae (Tarantula spider) protein is Mu-theraphotoxin-Hd1a.